A 341-amino-acid polypeptide reads, in one-letter code: MNKDFIELDGAIGGGQILRSALSLSMLTGKPFRIHNIRAKRSRPGLLRQHLTAVTAAAQISSADAEGTQIGSQSLSFAPGAIRGGDYEFAIGTAGSCSLVVQTLLPALLHADQPSRVRISGGTHNPLAPPFEFLERAWLPLLKRMGAQVEIELLRHGFAPAGGGALVMQVTPSALRPLHLETPGPIHSQQATALVADVPGHVAERELARVGKRLKWPEQALKGIWLDKQIGPGNVLLLEIACGEVTELFSSIGQSGVRAERVADQAVDQARQWLHSGAAVDEHLADQLLLPLAMAGGGSFSTTHMSEHLSSNIQVIRQFLNVEIVCTQANERILRVELRQG.

Residues glutamine 102 and 283–287 (HLADQ) each bind ATP. The Tele-AMP-histidine intermediate role is filled by histidine 308.

This sequence belongs to the RNA 3'-terminal cyclase family. Type 1 subfamily.

Its subcellular location is the cytoplasm. It catalyses the reaction a 3'-end 3'-phospho-ribonucleotide-RNA + ATP = a 3'-end 2',3'-cyclophospho-ribonucleotide-RNA + AMP + diphosphate. Its function is as follows. Catalyzes the conversion of 3'-phosphate to a 2',3'-cyclic phosphodiester at the end of RNA. The mechanism of action of the enzyme occurs in 3 steps: (A) adenylation of the enzyme by ATP; (B) transfer of adenylate to an RNA-N3'P to produce RNA-N3'PP5'A; (C) and attack of the adjacent 2'-hydroxyl on the 3'-phosphorus in the diester linkage to produce the cyclic end product. The biological role of this enzyme is unknown but it is likely to function in some aspects of cellular RNA processing. The sequence is that of RNA 3'-terminal phosphate cyclase from Ectopseudomonas mendocina (strain ymp) (Pseudomonas mendocina).